Consider the following 255-residue polypeptide: Small ribosomal subunit protein eS1 (255 aa).

Residue Ala2 is modified to N-acetylalanine; partial.

The protein belongs to the eukaryotic ribosomal protein eS1 family. Component of the small ribosomal subunit. Mature ribosomes consist of a small (40S) and a large (60S) subunit. The 40S subunit contains about 33 different proteins and 1 molecule of RNA (18S). The 60S subunit contains about 49 different proteins and 3 molecules of RNA (25S, 5.8S and 5S).

The protein resides in the cytoplasm. The sequence is that of Small ribosomal subunit protein eS1 from Vanderwaltozyma polyspora (strain ATCC 22028 / DSM 70294 / BCRC 21397 / CBS 2163 / NBRC 10782 / NRRL Y-8283 / UCD 57-17) (Kluyveromyces polysporus).